Here is an 897-residue protein sequence, read N- to C-terminus: DNA polymerase I (897 aa).

The region spanning 1–317 (MEQPVIKEGT…ILDNTPALDN (317 aa)) is the 5'-3' exonuclease domain. The 3'-5' exonuclease domain maps to 318–494 (APKKSRMIVL…RLCEYFEKGG (177 aa)). Residues 498-896 (DLLTLARDIE…FIAKRWNELK (399 aa)) form a polymerase region.

The protein belongs to the DNA polymerase type-A family. In terms of assembly, single-chain monomer with multiple functions.

The enzyme catalyses DNA(n) + a 2'-deoxyribonucleoside 5'-triphosphate = DNA(n+1) + diphosphate. In addition to polymerase activity, this DNA polymerase exhibits 3'-5' and 5'-3' exonuclease activity. The polypeptide is DNA polymerase I (polA) (Helicobacter pylori (strain J99 / ATCC 700824) (Campylobacter pylori J99)).